The chain runs to 363 residues: Cytochrome b (363 aa).

4 consecutive transmembrane segments (helical) span residues 23–43, 67–89, 102–122, and 164–184; these read VGFI…LLTF, WFVR…IHII, SWYS…TGYV, and FFIL…LHLY. Heme b-binding residues include His73 and His87. Residues His168 and His182 each contribute to the heme b site. His187 contacts a ubiquinone. Transmembrane regions (helical) follow at residues 210-230, 271-291, 309-329, and 332-352; these read ILFS…PQVG, VFPT…LLII, RVWT…GCIG, and VINL…TTFV.

This sequence belongs to the cytochrome b family. In terms of assembly, the main subunits of complex b-c1 are: cytochrome b, cytochrome c1 and the Rieske protein. It depends on heme b as a cofactor.

The protein localises to the mitochondrion inner membrane. Its function is as follows. Component of the ubiquinol-cytochrome c reductase complex (complex III or cytochrome b-c1 complex) that is part of the mitochondrial respiratory chain. The b-c1 complex mediates electron transfer from ubiquinol to cytochrome c. Contributes to the generation of a proton gradient across the mitochondrial membrane that is then used for ATP synthesis. The protein is Cytochrome b (MT-CYB) of Theileria parva (East coast fever infection agent).